Reading from the N-terminus, the 634-residue chain is Chaperone protein HtpG (634 aa).

The segment at 1-343 (MTEAENRVTL…SDSLPLNVSR (343 aa)) is a; substrate-binding. The b stretch occupies residues 344-560 (EILQENKQLE…SYGMSRTMER (217 aa)). The segment at 561-634 (IMKSAGQNIP…KLNGLLQSLL (74 aa)) is c.

This sequence belongs to the heat shock protein 90 family. As to quaternary structure, homodimer.

It localises to the cytoplasm. Its function is as follows. Molecular chaperone. Has ATPase activity. The sequence is that of Chaperone protein HtpG from Methylococcus capsulatus (strain ATCC 33009 / NCIMB 11132 / Bath).